A 506-amino-acid polypeptide reads, in one-letter code: Maturase K (506 aa).

This sequence belongs to the intron maturase 2 family. MatK subfamily.

It is found in the plastid. Its subcellular location is the chloroplast. Functionally, usually encoded in the trnK tRNA gene intron. Probably assists in splicing its own and other chloroplast group II introns. The polypeptide is Maturase K (Lathyrus sativus (White vetchling)).